The chain runs to 195 residues: Peptidyl-tRNA hydrolase (195 aa).

Tyr-14 provides a ligand contact to tRNA. His-19 acts as the Proton acceptor in catalysis. Tyr-64 and Asn-66 together coordinate tRNA.

Belongs to the PTH family. As to quaternary structure, monomer.

Its subcellular location is the cytoplasm. The enzyme catalyses an N-acyl-L-alpha-aminoacyl-tRNA + H2O = an N-acyl-L-amino acid + a tRNA + H(+). Hydrolyzes ribosome-free peptidyl-tRNAs (with 1 or more amino acids incorporated), which drop off the ribosome during protein synthesis, or as a result of ribosome stalling. Its function is as follows. Catalyzes the release of premature peptidyl moieties from peptidyl-tRNA molecules trapped in stalled 50S ribosomal subunits, and thus maintains levels of free tRNAs and 50S ribosomes. The polypeptide is Peptidyl-tRNA hydrolase (Desulforudis audaxviator (strain MP104C)).